A 142-amino-acid chain; its full sequence is Cell division protein SepF (142 aa).

Belongs to the SepF family. Homodimer. Interacts with FtsZ.

The protein resides in the cytoplasm. Functionally, cell division protein that is part of the divisome complex and is recruited early to the Z-ring. Probably stimulates Z-ring formation, perhaps through the cross-linking of FtsZ protofilaments. Its function overlaps with FtsA. The chain is Cell division protein SepF from Geobacillus kaustophilus (strain HTA426).